A 477-amino-acid polypeptide reads, in one-letter code: Bifunctional protein HldE (477 aa).

The interval 1-319 (MTVIFPNFSK…NIMNSHICTT (319 aa)) is ribokinase. An ATP-binding site is contributed by 195–198 (NISE). Aspartate 264 is a catalytic residue. The cytidylyltransferase stretch occupies residues 346–477 (MTNGVFDILH…NIINAIKRKN (132 aa)).

This sequence in the N-terminal section; belongs to the carbohydrate kinase PfkB family. In the C-terminal section; belongs to the cytidylyltransferase family. As to quaternary structure, homodimer.

The enzyme catalyses D-glycero-beta-D-manno-heptose 7-phosphate + ATP = D-glycero-beta-D-manno-heptose 1,7-bisphosphate + ADP + H(+). The catalysed reaction is D-glycero-beta-D-manno-heptose 1-phosphate + ATP + H(+) = ADP-D-glycero-beta-D-manno-heptose + diphosphate. It functions in the pathway nucleotide-sugar biosynthesis; ADP-L-glycero-beta-D-manno-heptose biosynthesis; ADP-L-glycero-beta-D-manno-heptose from D-glycero-beta-D-manno-heptose 7-phosphate: step 1/4. It participates in nucleotide-sugar biosynthesis; ADP-L-glycero-beta-D-manno-heptose biosynthesis; ADP-L-glycero-beta-D-manno-heptose from D-glycero-beta-D-manno-heptose 7-phosphate: step 3/4. Its function is as follows. Catalyzes the phosphorylation of D-glycero-D-manno-heptose 7-phosphate at the C-1 position to selectively form D-glycero-beta-D-manno-heptose-1,7-bisphosphate. In terms of biological role, catalyzes the ADP transfer from ATP to D-glycero-beta-D-manno-heptose 1-phosphate, yielding ADP-D-glycero-beta-D-manno-heptose. The polypeptide is Bifunctional protein HldE (Blochmanniella pennsylvanica (strain BPEN)).